Reading from the N-terminus, the 90-residue chain is Mucin-like protein 1 (90 aa).

The N-terminal stretch at 1-20 (MKFLAVLVLLGVSIFLVSAQ) is a signal peptide. O-linked (GalNAc...) threonine glycans are attached at residues threonine 23, threonine 24, threonine 30, threonine 34, threonine 46, threonine 47, threonine 51, threonine 52, threonine 54, threonine 55, threonine 59, threonine 60, threonine 62, and threonine 63. 2 stretches are compositionally biased toward low complexity: residues 25–36 (AAPADTYPATGP) and 44–68 (AETT…ASTT). The tract at residues 25-68 (AAPADTYPATGPADDEAPDAETTAAATTATTAAPTTATTAASTT) is disordered. 3 tandem repeats follow at residues 46 to 53 (TTAAATTA), 54 to 61 (TTAAPTTA), and 62 to 69 (TTAASTTA). The tract at residues 46 to 69 (TTAAATTATTAAPTTATTAASTTA) is 3 X 8 AA tandem repeat of T-T-A-A-[APS]-T-T-A. Serine 66 carries O-linked (GalNAc...) serine glycosylation. O-linked (GalNAc...) threonine glycosylation is found at threonine 67 and threonine 68.

Post-translationally, O-glycosylated. Expressed in mammary, salivary glands and prostate. Also detected in lung. Mainly expressed in cancer cell lines of breast origin. Highly expressed in lymph node-positive compared with node-negative tumors. Detected in all lymph node containing metastatic cells.

The protein localises to the secreted. The protein resides in the membrane. In terms of biological role, may play a role as marker for the diagnosis of metastatic breast cancer. The polypeptide is Mucin-like protein 1 (MUCL1) (Homo sapiens (Human)).